The chain runs to 88 residues: MKKIQVVVKDPVGIHARPASIIAGEANKFKSELKLVSPSGVEGNIKSIINLMSLGIKQNDHITIKAEGTDEEEALNAIKAVLEKHQVI.

The HPr domain occupies 1-88 (MKKIQVVVKD…KAVLEKHQVI (88 aa)). Residue H15 is the Pros-phosphohistidine intermediate of the active site. A Phosphoserine; by HPrK/P modification is found at S47.

Belongs to the HPr family.

It localises to the cytoplasm. With respect to regulation, phosphorylation on Ser-47 inhibits the phosphoryl transfer from enzyme I to HPr. Functionally, general (non sugar-specific) component of the phosphoenolpyruvate-dependent sugar phosphotransferase system (sugar PTS). This major carbohydrate active-transport system catalyzes the phosphorylation of incoming sugar substrates concomitantly with their translocation across the cell membrane. The phosphoryl group from phosphoenolpyruvate (PEP) is transferred to the phosphoryl carrier protein HPr by enzyme I. Phospho-HPr then transfers it to the PTS EIIA domain. In terms of biological role, P-Ser-HPr interacts with the catabolite control protein A (CcpA), forming a complex that binds to DNA at the catabolite response elements cre, operator sites preceding a large number of catabolite-regulated genes. Thus, P-Ser-HPr is a corepressor in carbon catabolite repression (CCR), a mechanism that allows bacteria to coordinate and optimize the utilization of available carbon sources. P-Ser-HPr also plays a role in inducer exclusion, in which it probably interacts with several non-PTS permeases and inhibits their transport activity. The polypeptide is Phosphocarrier protein HPr (ptsH) (Mycoplasma pneumoniae (strain ATCC 29342 / M129 / Subtype 1) (Mycoplasmoides pneumoniae)).